Here is a 373-residue protein sequence, read N- to C-terminus: Dof zinc finger protein 3 (373 aa).

Residues 1-23 form a disordered region; it reads MASGGALSPVEEKPTVVKTTKAE. Basic and acidic residues predominate over residues 10–23; sequence VEEKPTVVKTTKAE. The segment at 45–99 adopts a Dof-type zinc-finger fold; sequence PCCPRCNSIKTKFCYYNNYSMAQPRYFCRECRRYWTQGGSLRNVPVGGGCRKSKR. Zn(2+)-binding residues include C47, C50, C72, and C75. Residues 297–327 are disordered; that stretch reads ALGGADEQQGGGDGGEAVMTKDTGGGASSSA.

As to quaternary structure, interacts with RISBZ1/BZIP58.

Its subcellular location is the nucleus. In terms of biological role, transcriptional activator that binds specifically to the DNA consensus core sequence 5'-AAAG-3' also known as prolamin box. Can activate the expression of genes encoding for the seed storage proteins glutelin, prolamin and globulin. Functions synergistically with RISBZ/BZIP58 to positively regulate quantitatively many seed storage proteins. Functions synergistically with RISBZ1/BZIP58 to positively regulate some metabolic enzymes, such as alanine aminotransferase and pyruvate phosphate dikinase, that are expressed in developing seeds. Functions synergistically with RISBZ1/BZIP58 to positively regulate genes that are key players in the development of aleurone layers. Functions synergistically with RISBZ1/BZIP58 to positively regulate the glutelin GLUD-1 gene in endosperm of developing seeds. Can activate the expression of the bifunctional lysine-degrading enzyme, lysine ketoglutarate reductase/saccharopine dehydrogenase (LKR/SDH), one of the key regulators determining free lysine content in plants. In germinating seeds, involved in the gibberellin-mediated activation of the alpha-amylase AMY1.1/AMY1A gene. The sequence is that of Dof zinc finger protein 3 from Oryza sativa subsp. japonica (Rice).